The following is a 335-amino-acid chain: Serpentine receptor class gamma-11 (335 aa).

Helical transmembrane passes span phenylalanine 33 to isoleucine 53, phenylalanine 66 to isoleucine 86, proline 98 to leucine 118, leucine 154 to isoleucine 174, phenylalanine 202 to phenylalanine 222, glycine 242 to phenylalanine 262, and threonine 271 to methionine 291.

Belongs to the nematode receptor-like protein srg family.

It is found in the membrane. This is Serpentine receptor class gamma-11 (srg-11) from Caenorhabditis elegans.